Here is a 158-residue protein sequence, read N- to C-terminus: Ribosome maturation factor RimP (158 aa).

Belongs to the RimP family.

It localises to the cytoplasm. In terms of biological role, required for maturation of 30S ribosomal subunits. This chain is Ribosome maturation factor RimP, found in Pseudomonas fluorescens (strain SBW25).